A 243-amino-acid chain; its full sequence is Leucyl/phenylalanyl-tRNA--protein transferase (243 aa).

This sequence belongs to the L/F-transferase family.

The protein resides in the cytoplasm. It catalyses the reaction N-terminal L-lysyl-[protein] + L-leucyl-tRNA(Leu) = N-terminal L-leucyl-L-lysyl-[protein] + tRNA(Leu) + H(+). It carries out the reaction N-terminal L-arginyl-[protein] + L-leucyl-tRNA(Leu) = N-terminal L-leucyl-L-arginyl-[protein] + tRNA(Leu) + H(+). The enzyme catalyses L-phenylalanyl-tRNA(Phe) + an N-terminal L-alpha-aminoacyl-[protein] = an N-terminal L-phenylalanyl-L-alpha-aminoacyl-[protein] + tRNA(Phe). Its function is as follows. Functions in the N-end rule pathway of protein degradation where it conjugates Leu, Phe and, less efficiently, Met from aminoacyl-tRNAs to the N-termini of proteins containing an N-terminal arginine or lysine. In Vibrio cholerae serotype O1 (strain ATCC 39315 / El Tor Inaba N16961), this protein is Leucyl/phenylalanyl-tRNA--protein transferase.